The primary structure comprises 120 residues: MHAFSKIRLTFNQDSPQSHEDDAAGIAVQDAKPTLQAPPMYKVVLFNDDYTPMDFVVEVLEVFFNLNRELATKVMLAVHTEGRAVCGLFTRDIAETKAMQVNQYARESQHPLLCEIEKDG.

Belongs to the ClpS family. As to quaternary structure, binds to the N-terminal domain of the chaperone ClpA.

Its function is as follows. Involved in the modulation of the specificity of the ClpAP-mediated ATP-dependent protein degradation. The chain is ATP-dependent Clp protease adapter protein ClpS from Pseudomonas savastanoi pv. phaseolicola (strain 1448A / Race 6) (Pseudomonas syringae pv. phaseolicola (strain 1448A / Race 6)).